A 461-amino-acid chain; its full sequence is UDP-glycosyltransferase 88B1 (461 aa).

UDP-alpha-D-glucose is bound by residues serine 278, 340-341, 358-366, and 380-383; these read WA, HCGWNSSLE, and YAEQ.

It belongs to the UDP-glycosyltransferase family.

May glycosylate diterpenes or flavonols in leaves. The polypeptide is UDP-glycosyltransferase 88B1 (Stevia rebaudiana (Stevia)).